Consider the following 119-residue polypeptide: Ribonuclease P protein component (119 aa).

Belongs to the RnpA family. In terms of assembly, consists of a catalytic RNA component (M1 or rnpB) and a protein subunit.

It carries out the reaction Endonucleolytic cleavage of RNA, removing 5'-extranucleotides from tRNA precursor.. RNaseP catalyzes the removal of the 5'-leader sequence from pre-tRNA to produce the mature 5'-terminus. It can also cleave other RNA substrates such as 4.5S RNA. The protein component plays an auxiliary but essential role in vivo by binding to the 5'-leader sequence and broadening the substrate specificity of the ribozyme. In Shewanella woodyi (strain ATCC 51908 / MS32), this protein is Ribonuclease P protein component.